Reading from the N-terminus, the 466-residue chain is GTPase Der (466 aa).

EngA-type G domains are found at residues 3–167 (PTLV…PDEP) and 176–350 (PKIA…GAAM). GTP contacts are provided by residues 9–16 (GRSNVGKS), 56–60 (DTGGF), 119–122 (NKTE), 182–189 (GRPNVGKS), 229–233 (DTAGL), and 294–297 (NKWD). One can recognise a KH-like domain in the interval 351–435 (AHLPTPRLTR…PLRIEFRTGR (85 aa)). Residues 433 to 466 (TGRNPYAGKSPAPLTEAEAKRAHRRRRYGRKKYG) form a disordered region. Over residues 453–466 (RAHRRRRYGRKKYG) the composition is skewed to basic residues.

Belongs to the TRAFAC class TrmE-Era-EngA-EngB-Septin-like GTPase superfamily. EngA (Der) GTPase family. As to quaternary structure, associates with the 50S ribosomal subunit.

GTPase that plays an essential role in the late steps of ribosome biogenesis. In Nitrosospira multiformis (strain ATCC 25196 / NCIMB 11849 / C 71), this protein is GTPase Der.